A 211-amino-acid polypeptide reads, in one-letter code: Urease accessory protein UreG (211 aa).

11-18 (GPVGAGKT) is a binding site for GTP.

The protein belongs to the SIMIBI class G3E GTPase family. UreG subfamily. Homodimer. UreD, UreF and UreG form a complex that acts as a GTP-hydrolysis-dependent molecular chaperone, activating the urease apoprotein by helping to assemble the nickel containing metallocenter of UreC. The UreE protein probably delivers the nickel.

It is found in the cytoplasm. Its function is as follows. Facilitates the functional incorporation of the urease nickel metallocenter. This process requires GTP hydrolysis, probably effectuated by UreG. The protein is Urease accessory protein UreG of Actinobacillus pleuropneumoniae serotype 5b (strain L20).